The primary structure comprises 151 residues: Putative pre-16S rRNA nuclease (151 aa).

It belongs to the YqgF nuclease family.

It is found in the cytoplasm. Its function is as follows. Could be a nuclease involved in processing of the 5'-end of pre-16S rRNA. The sequence is that of Putative pre-16S rRNA nuclease from Bifidobacterium longum subsp. infantis (strain ATCC 15697 / DSM 20088 / JCM 1222 / NCTC 11817 / S12).